The chain runs to 315 residues: Olfactory receptor 2V2 (315 aa).

Topologically, residues 1-26 are extracellular; that stretch reads METWVNQSYTDGFFLLGIFSHSTADL. The N-linked (GlcNAc...) asparagine glycan is linked to N6. The helical transmembrane segment at 27 to 50 threads the bilayer; sequence VLFSVVMAVFTVALCGNVLLIFLI. Residues 51–58 are Cytoplasmic-facing; sequence YMDPHLHT. Residues 59–80 form a helical membrane-spanning segment; that stretch reads PMYFFLSQLSLMDLMLVCTNVP. Residues 81–101 are Extracellular-facing; the sequence is KMAANFLSGRKSISFVGCGIQ. The cysteines at positions 98 and 190 are disulfide-linked. The helical transmembrane segment at 102 to 121 threads the bilayer; sequence IGLFVCLVGSEGLLLGLMAY. Over 122 to 140 the chain is Cytoplasmic; the sequence is DRYVAISHPLHYPILMNQR. Residues 141–159 form a helical membrane-spanning segment; that stretch reads VCLQITGSSWAFGIIDGLI. Topologically, residues 160 to 196 are extracellular; that stretch reads QMVVVMNFPYCGLRKVNHFFCEMLSLLKLACVDTSLF. A helical membrane pass occupies residues 197-220; it reads EKVIFACCVFMLLFPFSIIVASYA. Topologically, residues 221-237 are cytoplasmic; it reads HILGTVLQMHSAQAWKK. A helical membrane pass occupies residues 238–260; that stretch reads ALATCSSHLTAVTLFYGAAMFIY. Over 261–273 the chain is Extracellular; that stretch reads LRPRHYRAPSHDK. The chain crosses the membrane as a helical span at residues 274–293; sequence VASIFYTVLTPMLNPLIYSL. Topologically, residues 294–315 are cytoplasmic; it reads RNREVMGALRKGLDRCRIGSQH.

The protein belongs to the G-protein coupled receptor 1 family.

Its subcellular location is the cell membrane. In terms of biological role, odorant receptor. The protein is Olfactory receptor 2V2 (OR2V2) of Homo sapiens (Human).